Here is a 227-residue protein sequence, read N- to C-terminus: Isopentenyl-diphosphate Delta-isomerase 1 (227 aa).

Lys-36 contributes to the substrate binding site. The Mg(2+) site is built by His-40 and His-51. Residues 49–199 enclose the Nudix hydrolase domain; sequence LLHRAFSVFL…EVKLTPWFKI (151 aa). The substrate site is built by Arg-70 and Lys-74. The active site involves Cys-86. Residue Ser-87 participates in substrate binding. 2 residues coordinate Mg(2+): Glu-146 and Glu-148. Glu-148 is a catalytic residue. Lys-176 carries the N6-acetyllysine modification. Positions 225–227 match the Microbody targeting signal motif; sequence HRM.

This sequence belongs to the IPP isomerase type 1 family. Monomer. It depends on Mg(2+) as a cofactor.

The protein resides in the peroxisome. It carries out the reaction isopentenyl diphosphate = dimethylallyl diphosphate. It participates in isoprenoid biosynthesis; dimethylallyl diphosphate biosynthesis; dimethylallyl diphosphate from isopentenyl diphosphate: step 1/1. Its function is as follows. Catalyzes the 1,3-allylic rearrangement of the homoallylic substrate isopentenyl (IPP) to its highly electrophilic allylic isomer, dimethylallyl diphosphate (DMAPP). This chain is Isopentenyl-diphosphate Delta-isomerase 1 (IDI1), found in Mesocricetus auratus (Golden hamster).